A 166-amino-acid chain; its full sequence is MTVMTLNLVEKQPAAMRRIIGKHLAVPRWQDTCDYYNQMMERERLTVCFHAQLKQRHATMCFEEMNDVERERLVCAIDELRGAFSKRRQVGASEYAYISFLTVSQRRTLFMHAGLTEKEFNQPYWRINEESCYWRDALFRALRELFSLFEYAPTILTSVKPEQYLH.

In terms of biological role, required for lagging strand synthesis. Might interact with the host dnaB protein. The chain is Replication gene B protein (B) from Escherichia phage P2 (Bacteriophage P2).